We begin with the raw amino-acid sequence, 120 residues long: Protein EPIDERMAL PATTERNING FACTOR 2 (120 aa).

The signal sequence occupies residues M1–S25. Intrachain disulfides connect C76–C107, C80–C86, C83–C109, and C95–C101.

The protein belongs to the plant cysteine rich small secretory peptide family. Epidermal patterning factor subfamily. As to quaternary structure, interacts with ERECTA, ERL1 and TMM. In terms of tissue distribution, expressed in leaves, especially by the MMCs and their early descendants cells (stomatal lineage cells) including guard mother cells (GMCs).

Its subcellular location is the secreted. In terms of biological role, controls stomatal patterning. Regulates the number of cells that enter, and remain in, the stomatal lineage by inhibiting protodermal cells from adopting the meristemoid mother cell (MMC) fate in a non-cell-autonomous manner. Mediates stomatal development inhibition. MEPF2: mobile signal controlling stomatal development in a non-cell-autonomous manner. Uses ERECTA as major receptor. Inactivated by cleavage by CRSP (AC Q9LNU1). May act by competing with somatogen (AC Q9SV72) for the same receptor, TMM (AC Q9SSD1). This is Protein EPIDERMAL PATTERNING FACTOR 2 from Arabidopsis thaliana (Mouse-ear cress).